The primary structure comprises 243 residues: Ubiquinone/menaquinone biosynthesis C-methyltransferase UbiE (243 aa).

S-adenosyl-L-methionine is bound by residues Thr69, Asp90, and 116-117; that span reads DA.

This sequence belongs to the class I-like SAM-binding methyltransferase superfamily. MenG/UbiE family.

It carries out the reaction a 2-demethylmenaquinol + S-adenosyl-L-methionine = a menaquinol + S-adenosyl-L-homocysteine + H(+). The enzyme catalyses a 2-methoxy-6-(all-trans-polyprenyl)benzene-1,4-diol + S-adenosyl-L-methionine = a 5-methoxy-2-methyl-3-(all-trans-polyprenyl)benzene-1,4-diol + S-adenosyl-L-homocysteine + H(+). The protein operates within quinol/quinone metabolism; menaquinone biosynthesis; menaquinol from 1,4-dihydroxy-2-naphthoate: step 2/2. It functions in the pathway cofactor biosynthesis; ubiquinone biosynthesis. Functionally, methyltransferase required for the conversion of demethylmenaquinol (DMKH2) to menaquinol (MKH2) and the conversion of 2-polyprenyl-6-methoxy-1,4-benzoquinol (DDMQH2) to 2-polyprenyl-3-methyl-6-methoxy-1,4-benzoquinol (DMQH2). This is Ubiquinone/menaquinone biosynthesis C-methyltransferase UbiE from Paraburkholderia xenovorans (strain LB400).